Consider the following 452-residue polypeptide: UPF0210 protein Dred_1672 (452 aa).

This sequence belongs to the UPF0210 family. Homodimer.

In Desulforamulus reducens (strain ATCC BAA-1160 / DSM 100696 / MI-1) (Desulfotomaculum reducens), this protein is UPF0210 protein Dred_1672.